The following is a 284-amino-acid chain: NADH-cytochrome b5 reductase 1 (284 aa).

Residues 7-27 (KLVVVIVIVVVPLLFKFIIGP) traverse the membrane as a helical segment. An FAD-binding FR-type domain is found at 38-142 (NDFQSFPLVE…KGPRGNYHYE (105 aa)). Residue 148-180 (HLGMIAGGTGIAPMYQIMKAIAMDSHDTTKVSL) coordinates FAD.

Belongs to the flavoprotein pyridine nucleotide cytochrome reductase family. Monomer. Component of the 2-(3-amino-3-carboxypropyl)histidine synthase complex composed of DPH1, DPH2, KTI11/DPH3 and a NADH-dependent reductase, predominantly CBR1. Interacts with KTI11/DPH3. Interacts with STE20. It depends on FAD as a cofactor.

The protein resides in the mitochondrion outer membrane. It catalyses the reaction 2 Fe(III)-[cytochrome b5] + NADH = 2 Fe(II)-[cytochrome b5] + NAD(+) + H(+). It carries out the reaction 2 Fe(3+)-[Dph3] + NADH = 2 Fe(2+)-[Dph3] + NAD(+) + H(+). It participates in protein modification; peptidyl-diphthamide biosynthesis. Competitively inhibited by NAD(+). Inhibited by mercurials such as p-chloromercuribenzoate (PCMB) and HgCl(2). Enzymatic activity increases under anaerobic conditions. In terms of biological role, NADH-dependent reductase for KTI11/DPH3 and cytochrome b5. Required for the first step of diphthamide biosynthesis, a post-translational modification of histidine which occurs in elongation factor 2. DPH1 and DPH2 transfer a 3-amino-3-carboxypropyl (ACP) group from S-adenosyl-L-methionine (SAM) to a histidine residue, the reaction is assisted by a reduction system comprising KTI11/DPH3 and a NADH-dependent reductase, predominantly CBR1. By reducing KTI11/DPH3, also involved in the formation of the tRNA wobble base modification mcm5s 2U (5-methoxycarbonylmethyl-2-thiouridine), mediated by the elongator complex. The cytochrome b5/NADH cytochrome b5 reductase electron transfer system supports the catalytic activity of several sterol biosynthetic enzymes. Plays a role in bud morphology. This Saccharomyces cerevisiae (strain YJM789) (Baker's yeast) protein is NADH-cytochrome b5 reductase 1 (CBR1).